Reading from the N-terminus, the 284-residue chain is Phosphonates import ATP-binding protein PhnC 1 (284 aa).

Residues 5 to 253 (IEVRGLSKSF…MLRDLYGSEA (249 aa)) form the ABC transporter domain. Position 38–45 (38–45 (GASGSGKS)) interacts with ATP.

The protein belongs to the ABC transporter superfamily. Phosphonates importer (TC 3.A.1.9.1) family. As to quaternary structure, the complex is composed of two ATP-binding proteins (PhnC), two transmembrane proteins (PhnE) and a solute-binding protein (PhnD).

It is found in the cell inner membrane. It carries out the reaction phosphonate(out) + ATP + H2O = phosphonate(in) + ADP + phosphate + H(+). In terms of biological role, part of the ABC transporter complex PhnCDE involved in phosphonates import. Responsible for energy coupling to the transport system. This chain is Phosphonates import ATP-binding protein PhnC 1, found in Cupriavidus metallidurans (strain ATCC 43123 / DSM 2839 / NBRC 102507 / CH34) (Ralstonia metallidurans).